Consider the following 352-residue polypeptide: Probable dual-specificity RNA methyltransferase RlmN (352 aa).

E99 (proton acceptor) is an active-site residue. The Radical SAM core domain occupies 105-339 (TKSRTTACVS…VTVRRSRGKD (235 aa)). C112 and C344 are oxidised to a cystine. Residues C119, C123, and C126 each coordinate [4Fe-4S] cluster. Residues 170–171 (GE), S202, 225–227 (SLH), and N301 contribute to the S-adenosyl-L-methionine site. C344 (S-methylcysteine intermediate) is an active-site residue.

Belongs to the radical SAM superfamily. RlmN family. It depends on [4Fe-4S] cluster as a cofactor.

The protein localises to the cytoplasm. The enzyme catalyses adenosine(2503) in 23S rRNA + 2 reduced [2Fe-2S]-[ferredoxin] + 2 S-adenosyl-L-methionine = 2-methyladenosine(2503) in 23S rRNA + 5'-deoxyadenosine + L-methionine + 2 oxidized [2Fe-2S]-[ferredoxin] + S-adenosyl-L-homocysteine. It carries out the reaction adenosine(37) in tRNA + 2 reduced [2Fe-2S]-[ferredoxin] + 2 S-adenosyl-L-methionine = 2-methyladenosine(37) in tRNA + 5'-deoxyadenosine + L-methionine + 2 oxidized [2Fe-2S]-[ferredoxin] + S-adenosyl-L-homocysteine. In terms of biological role, specifically methylates position 2 of adenine 2503 in 23S rRNA and position 2 of adenine 37 in tRNAs. The protein is Probable dual-specificity RNA methyltransferase RlmN of Christiangramia forsetii (strain DSM 17595 / CGMCC 1.15422 / KT0803) (Gramella forsetii).